The sequence spans 331 residues: MGRLILEHTLQGHKGRIWGVAWHPKGNSFASCGEDKAIRIWSLSGNTWTTKTILSDGHKRTIREVRWSPCGEYLASASFDATTAIWSKHECTATLEGHENEVKSVSWSRSGGLLATCSRDKSVWIWEVAGDDEFECAAVLNAHSQDVKRVVWHPTKEILASASYDNTIKMYAESALDSDWDCTATLSSHTSTVWSIDFDADGERLVSCSDDATLKIWRAYHPGNEAGIATPDKTTVWKCVCTLSGLHTRAIYDVSWCKLTGLIASACGDDAIRIFKESSDSKRDAPSFELLTSEESAHEQDVNAVEWNPVNVGQLISCSDDGTIKIWKLQE.

7 WD repeats span residues 12 to 51 (GHKG…WTTK), 57 to 96 (GHKR…ATLE), 97 to 136 (GHEN…EFEC), 142 to 181 (AHSQ…SDWD), 188 to 227 (SHTS…NEAG), 246 to 285 (LHTR…KRDA), and 297 to 331 (AHEQ…KLQE).

It belongs to the WD repeat CIA1 family.

In terms of biological role, essential component of the cytosolic iron-sulfur (Fe/S) protein assembly machinery. Required for the maturation of extramitochondrial Fe/S proteins. The polypeptide is Probable cytosolic iron-sulfur protein assembly protein Ciao1 (Drosophila mojavensis (Fruit fly)).